An 859-amino-acid polypeptide reads, in one-letter code: Leucine--tRNA ligase (859 aa).

The 'HIGH' region signature appears at Pro43–His53. The 'KMSKS' region signature appears at Lys614 to Ser618. Residue Lys617 coordinates ATP.

It belongs to the class-I aminoacyl-tRNA synthetase family.

The protein localises to the cytoplasm. It catalyses the reaction tRNA(Leu) + L-leucine + ATP = L-leucyl-tRNA(Leu) + AMP + diphosphate. This Magnetococcus marinus (strain ATCC BAA-1437 / JCM 17883 / MC-1) protein is Leucine--tRNA ligase.